The following is a 60-amino-acid chain: Large ribosomal subunit protein uL30 (60 aa).

This sequence belongs to the universal ribosomal protein uL30 family. As to quaternary structure, part of the 50S ribosomal subunit.

This Leuconostoc mesenteroides subsp. mesenteroides (strain ATCC 8293 / DSM 20343 / BCRC 11652 / CCM 1803 / JCM 6124 / NCDO 523 / NBRC 100496 / NCIMB 8023 / NCTC 12954 / NRRL B-1118 / 37Y) protein is Large ribosomal subunit protein uL30.